A 427-amino-acid polypeptide reads, in one-letter code: Glutamate-1-semialdehyde 2,1-aminomutase (427 aa).

At lysine 267 the chain carries N6-(pyridoxal phosphate)lysine.

The protein belongs to the class-III pyridoxal-phosphate-dependent aminotransferase family. HemL subfamily. As to quaternary structure, homodimer. The cofactor is pyridoxal 5'-phosphate.

The protein resides in the cytoplasm. The enzyme catalyses (S)-4-amino-5-oxopentanoate = 5-aminolevulinate. It participates in porphyrin-containing compound metabolism; protoporphyrin-IX biosynthesis; 5-aminolevulinate from L-glutamyl-tRNA(Glu): step 2/2. The protein is Glutamate-1-semialdehyde 2,1-aminomutase of Thermodesulfovibrio yellowstonii (strain ATCC 51303 / DSM 11347 / YP87).